Reading from the N-terminus, the 287-residue chain is Undecaprenyl-diphosphatase (287 aa).

7 helical membrane-spanning segments follow: residues 50-70 (PGVS…IAYF), 97-117 (LGFA…GIKF), 131-151 (IPSI…AEQV), 160-180 (VVLG…LLPG), 206-226 (FLLG…DALA), 234-254 (LPLL…IDWL), and 264-284 (WLFV…WGVY).

The protein belongs to the UppP family.

The protein localises to the cell inner membrane. It catalyses the reaction di-trans,octa-cis-undecaprenyl diphosphate + H2O = di-trans,octa-cis-undecaprenyl phosphate + phosphate + H(+). Functionally, catalyzes the dephosphorylation of undecaprenyl diphosphate (UPP). Confers resistance to bacitracin. This chain is Undecaprenyl-diphosphatase, found in Synechococcus sp. (strain CC9605).